A 232-amino-acid chain; its full sequence is RNA chaperone ProQ (232 aa).

The interval 105–182 is disordered; sequence EAKARVQAQR…REEQHTPVSD (78 aa). Basic and acidic residues-rich tracts occupy residues 117-138 and 147-177; these read QQAK…PPRE and RRKE…EEQH.

This sequence belongs to the ProQ family.

The protein resides in the cytoplasm. In terms of biological role, RNA chaperone with significant RNA binding, RNA strand exchange and RNA duplexing activities. May regulate ProP activity through an RNA-based, post-transcriptional mechanism. The protein is RNA chaperone ProQ of Escherichia coli O139:H28 (strain E24377A / ETEC).